A 110-amino-acid chain; its full sequence is U1-lycotoxin-Ls1gg (110 aa).

Residues 1–20 (MKFVLLFGVLLVTLFSYSSA) form the signal peptide. The propeptide occupies 21 to 44 (EMLDDFDQADEDELLSLIEKEEAR). 3 cysteine pairs are disulfide-bonded: Cys54–Cys71, Cys61–Cys89, and Cys73–Cys87.

This sequence belongs to the neurotoxin 19 (CSTX) family. 03 subfamily. In terms of tissue distribution, expressed by the venom gland.

The protein resides in the secreted. This is U1-lycotoxin-Ls1gg from Lycosa singoriensis (Wolf spider).